A 37-amino-acid chain; its full sequence is Large ribosomal subunit protein bL36 (37 aa).

Belongs to the bacterial ribosomal protein bL36 family.

This Thioalkalivibrio sulfidiphilus (strain HL-EbGR7) protein is Large ribosomal subunit protein bL36.